Reading from the N-terminus, the 522-residue chain is Zinc finger protein 892 (522 aa).

Disordered regions lie at residues methionine 1–lysine 22 and alanine 96–proline 124. A compositionally biased stretch (basic and acidic residues) spans lysine 100–aspartate 116. 10 consecutive C2H2-type zinc fingers follow at residues tryptophan 221–histidine 243, tyrosine 249–histidine 271, tyrosine 277–histidine 299, tyrosine 305–histidine 327, tyrosine 333–histidine 355, tyrosine 361–histidine 383, tyrosine 389–histidine 411, tyrosine 417–histidine 439, tyrosine 445–histidine 467, and tyrosine 473–histidine 495.

The protein belongs to the krueppel C2H2-type zinc-finger protein family.

The protein resides in the nucleus. Its function is as follows. May be involved in transcriptional regulation. This chain is Zinc finger protein 892, found in Homo sapiens (Human).